We begin with the raw amino-acid sequence, 145 residues long: Hemoglobin fetal subunit beta (145 aa).

A Globin domain is found at 1 to 145; it reads MLSAEEKAAV…VANALAHRYH (145 aa). Residues His62 and His91 each contribute to the heme b site.

Belongs to the globin family. In terms of assembly, heterotetramer of two alpha chains and two beta chains. As to expression, red blood cells.

Its function is as follows. Involved in oxygen transport from the lung to the various peripheral tissues. The sequence is that of Hemoglobin fetal subunit beta from Bos taurus (Bovine).